Reading from the N-terminus, the 217-residue chain is Ribosome maturation factor RimP (217 aa).

Belongs to the RimP family.

It localises to the cytoplasm. Functionally, required for maturation of 30S ribosomal subunits. In Nocardia farcinica (strain IFM 10152), this protein is Ribosome maturation factor RimP.